Here is a 174-residue protein sequence, read N- to C-terminus: uncharacterized protein (174 aa).

This is an uncharacterized protein from Homo sapiens (Human).